Consider the following 147-residue polypeptide: UPF0735 ACT domain-containing protein YszB (147 aa).

The 76-residue stretch at 70-145 folds into the ACT domain; sequence TLFFHLEDRS…FVEKVEILGS (76 aa).

It belongs to the UPF0735 family.

The protein is UPF0735 ACT domain-containing protein YszB (yszB) of Bacillus subtilis (strain 168).